Here is a 547-residue protein sequence, read N- to C-terminus: Collagen EMF1-alpha (547 aa).

Disordered regions lie at residues Gly-1–Val-99 and Gly-116–Ile-311. A triple-helical region region spans residues Gly-1 to Lys-280. 2 stretches are compositionally biased toward low complexity: residues Gln-27 to Gln-69 and Gln-160 to Gln-175. Allysine is present on Lys-187. Residues Val-219–Asp-228 are compositionally biased toward basic and acidic residues. Positions Asp-246–Gln-271 are enriched in low complexity. Gly residues predominate over residues Gly-272–Gly-281. Positions Gly-308–Ala-336 are telopeptide. Residues Glu-337–Tyr-547 constitute a propeptide, C-terminal propeptide. The 205-residue stretch at Leu-343–Tyr-547 folds into the Fibrillar collagen NC1 domain. N-linked (GlcNAc...) asparagine glycans are attached at residues Asn-381 and Asn-406.

This sequence belongs to the fibrillar collagen family.

Its subcellular location is the secreted. It is found in the extracellular space. It localises to the extracellular matrix. This chain is Collagen EMF1-alpha (COLF1), found in Ephydatia muelleri (Mueller's freshwater sponge).